The chain runs to 194 residues: Calcium channel flower (194 aa).

3 consecutive transmembrane segments (helical) span residues 35–55 (LGIVAAFFAILFGLWNVFSII), 66–88 (IIQMVAGFVVMLLEAPCCFVCFE), and 113–133 (AIPPIILCFGLASLFGSGLIF).

It belongs to the calcium channel flower family. As to quaternary structure, homomultimer. Associates with the dally/ magu complex.

It is found in the cytoplasmic vesicle. It localises to the secretory vesicle. Its subcellular location is the synaptic vesicle membrane. The protein localises to the presynaptic cell membrane. The protein resides in the endosome. Channel activity is inhibited by La(3+), which reduces Ca(2+) influx and thus inhibits it's function in promoting activity-dependent bulk endocytosis (ADBE) in response to high stimuli. In terms of biological role, transmembrane protein which mediates synaptic endocytosis, fitness-based cell culling, neuronal culling, morphogen gradient scaling, and calcium transport. Regulates synaptic endocytosis and hence couples exo- with endocytosis. Controls two major modes of synaptic vesicle (SV) endocytosis in the synaptic boutons of neuromuscular junctions (NMJs); Ca(2+) channel-independent Clathrin-mediated endocytosis (CME) in response to mild stimulation, and Ca(2+) channel-dependent activity-dependent bulk endocytosis (ADBE) in response to strong stimulation. Functions in ADBE and subsequent SV reformation from bulk endosomes by initiating Ca(2+) channel-dependent phosphatidylinositol 4,5-bisphosphate (PtdIns(4,5)P2) compartmentalization in synaptic boutons. There it acts at the periactive zone to provide the low Ca(2+) levels required to initiate Calcineurin activation and upregulate PtdIns(4,5)P2. Conversely PtdIns(4,5)P2 enhances fwe Ca(2+) channel-activity, establishing a positive feedback loop that induces PtdIns(4,5)P2 microdomain at the periactive zone. These microdomains trigger bulk membrane invagination (i.e. ADBE) by triggering actin polymerization while also promoting localization of fwe to bulk endosomes, thereby removing the ADBE trigger to reduce endocytosis and prevent excess membrane uptake. PtdIns(4,5)P2 then promotes SV reformation from the bulk endosomes, to coordinate ADBE and subsequent SV reformation. Different combinations of the flower isoforms at the cell membrane are also required for the identification and elimination of suboptimal or supernumerary cells during development, regeneration, and adulthood. Required for the recognition and elimination of unfit cells in the developing wing during cell competition. In the developing pupal retina, mediates the elimination of unwanted postmitotic neurons, including supernumerary photoreceptor neurons that form at the periphery of the retina and are contained within incomplete ommatidia units. Also required for efficient elimination and replacement of old neurons by newly generated neurons during regeneration in the adult brain following mechanical injury. Downstream of the flower fitness fingerprints, cells identified as unwanted or unfit are eliminated via apoptosis through the expression of ahuizotl (azot). However, the cells marked for elimination by the flower isoforms only undergo apoptosis if additional thresholds are met; (1) their neighboring fit/healthy cells express different levels of the fwe isoforms, and (2) the levels of the protective signal SPARC expressed by the loser or unwanted cells are unable to inhibit caspase activation. These additional thresholds for flower-mediated apoptosis, allows useful cells to recover from transient and limited stress before they are unnecessarily eliminated. Functions with dally and magu in a mechanism of scaling, which utilises apoptosis to ensure that the dpp morphogen gradient, which mediates organ growth, remains proportional to the size of the growing wing. In this mechanism, fwe represses dally- and Magu-dependent activity in expanding the gradient, and dally/Magu inhibits fwe-dependent apoptosis to keep cell death rate low. When the levels of these different proteins are optimally regulated the gradient correctly scales with organ growth but when this fails, fwe-mediated apoptosis is activated to trim the developing tissue to match the correct size of the gradient. The polypeptide is Calcium channel flower (Drosophila yakuba (Fruit fly)).